A 38-amino-acid chain; its full sequence is Photosystem II reaction center protein L (38 aa).

Residues 17 to 37 traverse the membrane as a helical segment; the sequence is SLFWGLLLIFVLAVLFSSYFF.

Belongs to the PsbL family. PSII is composed of 1 copy each of membrane proteins PsbA, PsbB, PsbC, PsbD, PsbE, PsbF, PsbH, PsbI, PsbJ, PsbK, PsbL, PsbM, PsbT, PsbX, PsbY, PsbZ, Psb30/Ycf12, at least 3 peripheral proteins of the oxygen-evolving complex and a large number of cofactors. It forms dimeric complexes.

It is found in the plastid. It localises to the chloroplast thylakoid membrane. Functionally, one of the components of the core complex of photosystem II (PSII). PSII is a light-driven water:plastoquinone oxidoreductase that uses light energy to abstract electrons from H(2)O, generating O(2) and a proton gradient subsequently used for ATP formation. It consists of a core antenna complex that captures photons, and an electron transfer chain that converts photonic excitation into a charge separation. This subunit is found at the monomer-monomer interface and is required for correct PSII assembly and/or dimerization. This is Photosystem II reaction center protein L from Porphyra purpurea (Red seaweed).